The primary structure comprises 321 residues: Coproporphyrin III ferrochelatase (321 aa).

Fe(2+)-binding residues include histidine 185 and glutamate 267.

The protein belongs to the ferrochelatase family.

The protein localises to the cytoplasm. The enzyme catalyses Fe-coproporphyrin III + 2 H(+) = coproporphyrin III + Fe(2+). The protein operates within porphyrin-containing compound metabolism; protoheme biosynthesis. Its function is as follows. Involved in coproporphyrin-dependent heme b biosynthesis. Catalyzes the insertion of ferrous iron into coproporphyrin III to form Fe-coproporphyrin III. This chain is Coproporphyrin III ferrochelatase, found in Lacticaseibacillus paracasei (strain ATCC 334 / BCRC 17002 / CCUG 31169 / CIP 107868 / KCTC 3260 / NRRL B-441) (Lactobacillus paracasei).